The following is a 412-amino-acid chain: Cysteate synthase (412 aa).

Lys105 is modified (N6-(pyridoxal phosphate)lysine). The pyridoxal 5'-phosphate site is built by Asn131 and Thr382.

Belongs to the threonine synthase family. Cysteate synthase subfamily. As to quaternary structure, homotrimer. Pyridoxal 5'-phosphate serves as cofactor.

The enzyme catalyses O-phospho-L-serine + sulfite + H(+) = L-cysteate + phosphate. Its pathway is cofactor biosynthesis; coenzyme M biosynthesis. Functionally, specifically catalyzes the beta-elimination of phosphate from L-phosphoserine and the beta-addition of sulfite to the dehydroalanine intermediate to produce L-cysteate. The sequence is that of Cysteate synthase from Methanocorpusculum labreanum (strain ATCC 43576 / DSM 4855 / Z).